Consider the following 405-residue polypeptide: Chorismate synthase (405 aa).

Arg43 and Arg49 together coordinate NADP(+). FMN contacts are provided by residues Arg138–Ser140 and Gln259–Ala260. Basic and acidic residues predominate over residues Arg275–Pro286. Positions Arg275–Gly308 are disordered. FMN is bound by residues Gly303, Lys318–Thr322, and Arg344.

It belongs to the chorismate synthase family. In terms of assembly, homotetramer. FMNH2 is required as a cofactor.

It catalyses the reaction 5-O-(1-carboxyvinyl)-3-phosphoshikimate = chorismate + phosphate. It functions in the pathway metabolic intermediate biosynthesis; chorismate biosynthesis; chorismate from D-erythrose 4-phosphate and phosphoenolpyruvate: step 7/7. Functionally, catalyzes the anti-1,4-elimination of the C-3 phosphate and the C-6 proR hydrogen from 5-enolpyruvylshikimate-3-phosphate (EPSP) to yield chorismate, which is the branch point compound that serves as the starting substrate for the three terminal pathways of aromatic amino acid biosynthesis. This reaction introduces a second double bond into the aromatic ring system. In Nocardia farcinica (strain IFM 10152), this protein is Chorismate synthase.